The chain runs to 345 residues: Biotin synthase (345 aa).

The 219-residue stretch at 38–256 folds into the Radical SAM core domain; that stretch reads RQVQVSTLLS…IAVARIMMPA (219 aa). Cysteine 53, cysteine 57, and cysteine 60 together coordinate [4Fe-4S] cluster. Residues cysteine 97, cysteine 128, cysteine 188, and arginine 260 each coordinate [2Fe-2S] cluster.

It belongs to the radical SAM superfamily. Biotin synthase family. Homodimer. [4Fe-4S] cluster serves as cofactor. [2Fe-2S] cluster is required as a cofactor.

It catalyses the reaction (4R,5S)-dethiobiotin + (sulfur carrier)-SH + 2 reduced [2Fe-2S]-[ferredoxin] + 2 S-adenosyl-L-methionine = (sulfur carrier)-H + biotin + 2 5'-deoxyadenosine + 2 L-methionine + 2 oxidized [2Fe-2S]-[ferredoxin]. It participates in cofactor biosynthesis; biotin biosynthesis; biotin from 7,8-diaminononanoate: step 2/2. Catalyzes the conversion of dethiobiotin (DTB) to biotin by the insertion of a sulfur atom into dethiobiotin via a radical-based mechanism. In Pectobacterium atrosepticum (strain SCRI 1043 / ATCC BAA-672) (Erwinia carotovora subsp. atroseptica), this protein is Biotin synthase.